Reading from the N-terminus, the 1229-residue chain is DNA-directed RNA polymerase subunit beta (1229 aa).

The disordered stretch occupies residues 1175 to 1229 (ESIDEDEQPQGLGAFERGLEEVENGEEDDDKEKFYEDLMDASQEQDESADDDIDE). Composition is skewed to acidic residues over residues 1195-1204 (EVENGEEDDD) and 1211-1229 (DLMDASQEQDESADDDIDE).

It belongs to the RNA polymerase beta chain family. The RNAP catalytic core consists of 2 alpha, 1 beta, 1 beta' and 1 omega subunit. When a sigma factor is associated with the core the holoenzyme is formed, which can initiate transcription.

It carries out the reaction RNA(n) + a ribonucleoside 5'-triphosphate = RNA(n+1) + diphosphate. In terms of biological role, DNA-dependent RNA polymerase catalyzes the transcription of DNA into RNA using the four ribonucleoside triphosphates as substrates. The protein is DNA-directed RNA polymerase subunit beta of Caldicellulosiruptor saccharolyticus (strain ATCC 43494 / DSM 8903 / Tp8T 6331).